Here is a 403-residue protein sequence, read N- to C-terminus: Methylthioribose-1-phosphate isomerase (403 aa).

Asp-277 (proton donor) is an active-site residue.

This sequence belongs to the eIF-2B alpha/beta/delta subunits family. MtnA subfamily.

The protein localises to the cytoplasm. It localises to the nucleus. It catalyses the reaction 5-(methylsulfanyl)-alpha-D-ribose 1-phosphate = 5-(methylsulfanyl)-D-ribulose 1-phosphate. The protein operates within amino-acid biosynthesis; L-methionine biosynthesis via salvage pathway; L-methionine from S-methyl-5-thio-alpha-D-ribose 1-phosphate: step 1/6. In terms of biological role, catalyzes the interconversion of methylthioribose-1-phosphate (MTR-1-P) into methylthioribulose-1-phosphate (MTRu-1-P). This chain is Methylthioribose-1-phosphate isomerase, found in Lodderomyces elongisporus (strain ATCC 11503 / CBS 2605 / JCM 1781 / NBRC 1676 / NRRL YB-4239) (Yeast).